Here is a 250-residue protein sequence, read N- to C-terminus: MYKLVLVRHGESKWNKENLFTGWTDVKLSEKGVSEACEGGRILKEEGYSFDIAFSSMLVRANDTLNIILCELGQSYIDVEKSWRLNERHYGALQGLNKAETAEKYGEDKVLIWRRSYNVPPMPLDESDKRHPIHDSRYKNIPKSELPSTECLKDTVARVIPYWTDKIAKAILEGKRVIVAAHGNSLRALVKYLDNMSEEDILKLNIPTGIPLVYELDKNLKPVKHYYLGDEDKIKAAMESVANQGKKIDR.

Residues 8–15 (RHGESKWN), 21–22 (TG), R60, 87–90 (ERHY), K98, 114–115 (RR), and 183–184 (GN) contribute to the substrate site. The active-site Tele-phosphohistidine intermediate is H9. E87 acts as the Proton donor/acceptor in catalysis.

It belongs to the phosphoglycerate mutase family. BPG-dependent PGAM subfamily.

It catalyses the reaction (2R)-2-phosphoglycerate = (2R)-3-phosphoglycerate. It participates in carbohydrate degradation; glycolysis; pyruvate from D-glyceraldehyde 3-phosphate: step 3/5. Its function is as follows. Catalyzes the interconversion of 2-phosphoglycerate and 3-phosphoglycerate. The sequence is that of 2,3-bisphosphoglycerate-dependent phosphoglycerate mutase from Borrelia recurrentis (strain A1).